We begin with the raw amino-acid sequence, 77 residues long: ATP synthase subunit 9, mitochondrial (77 aa).

Transmembrane regions (helical) follow at residues 8–28 (MGAG…GNVL) and 45–72 (LFGY…LISF).

This sequence belongs to the ATPase C chain family. As to quaternary structure, F-type ATPases have 2 components, CF(1) - the catalytic core - and CF(0) - the membrane proton channel. CF(1) has five subunits: alpha(3), beta(3), gamma(1), delta(1), epsilon(1). CF(0) has three main subunits: a, b and c.

The protein resides in the mitochondrion membrane. Its function is as follows. This protein is one of the chains of the nonenzymatic membrane component (F0) of mitochondrial ATPase. The chain is ATP synthase subunit 9, mitochondrial (ATP9) from Petunia sp. (Petunia).